The following is a 345-amino-acid chain: Ferredoxin--NADP reductase (345 aa).

Positions 38, 46, 51, 91, 129, 295, and 336 each coordinate FAD.

Belongs to the ferredoxin--NADP reductase type 2 family. As to quaternary structure, homodimer. The cofactor is FAD.

It carries out the reaction 2 reduced [2Fe-2S]-[ferredoxin] + NADP(+) + H(+) = 2 oxidized [2Fe-2S]-[ferredoxin] + NADPH. This is Ferredoxin--NADP reductase from Rhodospirillum rubrum (strain ATCC 11170 / ATH 1.1.1 / DSM 467 / LMG 4362 / NCIMB 8255 / S1).